Here is a 648-residue protein sequence, read N- to C-terminus: DNA mismatch repair protein MutL (648 aa).

The tract at residues 336–443 is disordered; that stretch reads ERPFEPSSPQ…SGSAGESRAR (108 aa). Positions 370-381 are enriched in polar residues; it reads SPESKTHSTWNE. Basic and acidic residues predominate over residues 383–410; it reads SRVDTSRAETSRESRIDSPLGERTRDIA.

It belongs to the DNA mismatch repair MutL/HexB family.

Its function is as follows. This protein is involved in the repair of mismatches in DNA. It is required for dam-dependent methyl-directed DNA mismatch repair. May act as a 'molecular matchmaker', a protein that promotes the formation of a stable complex between two or more DNA-binding proteins in an ATP-dependent manner without itself being part of a final effector complex. In Shewanella sp. (strain ANA-3), this protein is DNA mismatch repair protein MutL.